The sequence spans 248 residues: Protein maestro (248 aa).

Positions Met-1 to Pro-20 are disordered. HEAT repeat units follow at residues Glu-44–Ala-79 and Ser-128–Ala-163.

It localises to the nucleus. The protein resides in the nucleolus. The protein is Protein maestro (MRO) of Macaca fascicularis (Crab-eating macaque).